A 322-amino-acid polypeptide reads, in one-letter code: DNA repair and recombination protein RadA (322 aa).

105-112 (GMFGSGKT) provides a ligand contact to ATP.

This sequence belongs to the eukaryotic RecA-like protein family.

Involved in DNA repair and in homologous recombination. Binds and assemble on single-stranded DNA to form a nucleoprotein filament. Hydrolyzes ATP in a ssDNA-dependent manner and promotes DNA strand exchange between homologous DNA molecules. The protein is DNA repair and recombination protein RadA of Methanococcus maripaludis (strain DSM 14266 / JCM 13030 / NBRC 101832 / S2 / LL).